Consider the following 318-residue polypeptide: AT-hook motif nuclear-localized protein 7 (318 aa).

Disordered regions lie at residues 1–76 and 241–318; these read METS…PSSS and SDQQ…LPVD. Positions 56 to 64 match the Bipartite nuclear localization signal motif; that stretch reads KKRRGRPRK. Residues 56–68 constitute a DNA-binding region (a.T hook); it reads KKRRGRPRKYEAN. Residues 120–259 form the PPC domain; it reads GSNFTPHVIT…RKQRVEHAPA (140 aa). The segment covering 243-256 has biased composition (basic and acidic residues); it reads QQDHQKPRKQRVEH. A compositionally biased stretch (pro residues) spans 264–274; it reads VPPPPSPPPPA. The segment covering 288–312 has biased composition (polar residues); sequence PPSSFGISSWTNGQDMPRNSATDIN.

It is found in the nucleus. Functionally, transcription factor that specifically binds AT-rich DNA sequences related to the nuclear matrix attachment regions (MARs). The chain is AT-hook motif nuclear-localized protein 7 from Arabidopsis thaliana (Mouse-ear cress).